We begin with the raw amino-acid sequence, 214 residues long: Urease accessory protein UreF (214 aa).

This sequence belongs to the UreF family. As to quaternary structure, ureD, UreF and UreG form a complex that acts as a GTP-hydrolysis-dependent molecular chaperone, activating the urease apoprotein by helping to assemble the nickel containing metallocenter of UreC. The UreE protein probably delivers the nickel.

The protein resides in the cytoplasm. In terms of biological role, required for maturation of urease via the functional incorporation of the urease nickel metallocenter. This chain is Urease accessory protein UreF, found in Ruegeria sp. (strain TM1040) (Silicibacter sp.).